A 172-amino-acid chain; its full sequence is Adenine phosphoribosyltransferase (172 aa).

It belongs to the purine/pyrimidine phosphoribosyltransferase family. Homodimer.

It localises to the cytoplasm. The enzyme catalyses AMP + diphosphate = 5-phospho-alpha-D-ribose 1-diphosphate + adenine. It functions in the pathway purine metabolism; AMP biosynthesis via salvage pathway; AMP from adenine: step 1/1. Functionally, catalyzes a salvage reaction resulting in the formation of AMP, that is energically less costly than de novo synthesis. This Streptococcus mutans serotype c (strain ATCC 700610 / UA159) protein is Adenine phosphoribosyltransferase.